A 95-amino-acid chain; its full sequence is Defensin (95 aa).

The N-terminal stretch at 1–17 (MKNYVFALLVVTAVAIA) is a signal peptide. The propeptide occupies 18–55 (LPNEDKNAPMRVHLLPQKEDESLKLEVTPVKEHHRTRR). 3 disulfide bridges follow: Cys-58–Cys-85, Cys-71–Cys-91, and Cys-75–Cys-93.

This sequence belongs to the invertebrate defensin family. Type 1 subfamily.

It is found in the secreted. Antibacterial peptide mostly active against Gram-positive bacteria. This is Defensin from Formica aquilonia (Red wood ant).